The primary structure comprises 351 residues: L-threonine 3-dehydrogenase (351 aa).

Zn(2+) is bound at residue Cys-42. Active-site charge relay system residues include Thr-44 and His-47. 6 residues coordinate Zn(2+): His-67, Glu-68, Cys-97, Cys-100, Cys-103, and Cys-111. Residues Ile-179, Asp-199, Arg-204, 266-268 (LGL), and 291-292 (IT) each bind NAD(+).

It belongs to the zinc-containing alcohol dehydrogenase family. As to quaternary structure, homotetramer. It depends on Zn(2+) as a cofactor.

Its subcellular location is the cytoplasm. The catalysed reaction is L-threonine + NAD(+) = (2S)-2-amino-3-oxobutanoate + NADH + H(+). Its pathway is amino-acid degradation; L-threonine degradation via oxydo-reductase pathway; glycine from L-threonine: step 1/2. Catalyzes the NAD(+)-dependent oxidation of L-threonine to 2-amino-3-ketobutyrate. The protein is L-threonine 3-dehydrogenase of Symbiobacterium thermophilum (strain DSM 24528 / JCM 14929 / IAM 14863 / T).